Consider the following 358-residue polypeptide: uncharacterized protein (358 aa).

An ATP-binding site is contributed by 29 to 36; it reads GPINSGKT.

It belongs to the archaeal ATPase family.

This is an uncharacterized protein from Methanocaldococcus jannaschii (strain ATCC 43067 / DSM 2661 / JAL-1 / JCM 10045 / NBRC 100440) (Methanococcus jannaschii).